The following is a 375-amino-acid chain: Trichodiene synthase (375 aa).

It belongs to the trichodiene synthase family.

It catalyses the reaction (2E,6E)-farnesyl diphosphate = trichodiene + diphosphate. It functions in the pathway sesquiterpene biosynthesis; trichothecene biosynthesis. TS is a member of the terpene cyclase group of enzymes. It catalyzes the isomerization and cyclization of farnesyl pyro-phosphate to form trichodiene, the first cyclic intermediate in the biosynthetic pathway for trichothecenes. It serves to branch trichothecene biosynthesis from the isoprenoid pathway. This is Trichodiene synthase (TRI5) from Fusarium pseudograminearum (Wheat and barley crown-rot fungus).